The chain runs to 1406 residues: DNA-directed RNA polymerase subunit beta' (1406 aa).

Positions 72, 74, 87, and 90 each coordinate Zn(2+). Asp462, Asp464, and Asp466 together coordinate Mg(2+). The Zn(2+) site is built by Cys816, Cys891, Cys898, and Cys901.

Belongs to the RNA polymerase beta' chain family. In terms of assembly, the RNAP catalytic core consists of 2 alpha, 1 beta, 1 beta' and 1 omega subunit. When a sigma factor is associated with the core the holoenzyme is formed, which can initiate transcription. Mg(2+) is required as a cofactor. Zn(2+) serves as cofactor.

The catalysed reaction is RNA(n) + a ribonucleoside 5'-triphosphate = RNA(n+1) + diphosphate. Its function is as follows. DNA-dependent RNA polymerase catalyzes the transcription of DNA into RNA using the four ribonucleoside triphosphates as substrates. The polypeptide is DNA-directed RNA polymerase subunit beta' (Psychrobacter arcticus (strain DSM 17307 / VKM B-2377 / 273-4)).